The primary structure comprises 809 residues: MRSSYQPVSTTNFEHENAIPTASSSHNLLMSQRFDDSPPSSNDNSIETNITPPPEPPSYEFDIEDPHDDLHKRTHLQRVSIGFQEKILEPLMENIIHPLLQISKFVPDKADYYLSKIGNPFILRRFFYIIFMSFIAYYVLSSGYLFNEKASGSKGMFSQHDILFEYAKKSVDLAKFERDLEYISSMPHGSGTKGDAAIYRYIQESFDNNGLKLVKEMGYSVYSNYPGNVSISYYDNKNEKHDLELSKENFNPLSSNGKLSKVSLIYGGKGTTYDLQHLKDSKTIEDGKDYVLLLQYDKLVSQQVLIAEKFGAKAVIFISEPYGENIDVVQSKPVGLPQYSTGDASGLNWDGSPVEEKDHKFWRQTHIPTIPISTRQGKELLSRLSSGGVTVDDGNSDRSNSGKMGDVLIDVDLQTNVREKHFIPNIVGKIEGREQSDKAIIIAASRNSINFGTTYPNFGTAALLSIVQLFQEVKYKFGWKPLRNIYFISFGGTEFNYAGSSELVEQRLTPLKDEIYSLIDISQLGIPFAEKYENGKTRGELSIETHPLLKKFFNRNAHGNFDISVDNVQHYGDWTPFLANGIPVSVISSDSTRNRDTPTETSEDKFERVEKILEDEQNQQSVKDLLVYLLHISMELIDDPLLHFDIISYVEDIDERLQRLEQAYPEKLNFTSIIKGLLFWKKIGSEWASWTQGWENIVWSHGDGIEPSLLSINRWTWNKKLTNIGRRTCSPAGLPNRSFYKNVLFGPTLIQEDKSKNGGNVDFWTFPGVMDAIYDDDWKRAQEQIDLIGKVLHQSAALFVEETNDIGYK.

2 stretches are compositionally biased toward polar residues: residues 1–12 (MRSSYQPVSTTN) and 20–30 (PTASSSHNLLM). The interval 1–66 (MRSSYQPVST…PSYEFDIEDP (66 aa)) is disordered. The Cytoplasmic segment spans residues 1–125 (MRSSYQPVST…KIGNPFILRR (125 aa)). Low complexity predominate over residues 37–50 (SPPSSNDNSIETNI). The chain crosses the membrane as a helical; Signal-anchor for type II membrane protein span at residues 126-146 (FFYIIFMSFIAYYVLSSGYLF). Over 147–809 (NEKASGSKGM…VEETNDIGYK (663 aa)) the chain is Extracellular. N-linked (GlcNAc...) asparagine glycosylation occurs at Asn228. The PA domain maps to 255–349 (SNGKLSKVSL…STGDASGLNW (95 aa)). N-linked (GlcNAc...) asparagine glycosylation is found at Asn669 and Asn736.

It belongs to the peptidase M28 family. M28B subfamily.

The protein resides in the membrane. The polypeptide is Putative zinc metalloprotease TRE2 (TRE2) (Saccharomyces cerevisiae (strain ATCC 204508 / S288c) (Baker's yeast)).